The following is a 224-amino-acid chain: UPF0758 protein PST_0473 (224 aa).

In terms of domain architecture, MPN spans 102-224 (ALESPQAVRD…PLSMAEYGWM (123 aa)). Residues His-173, His-175, and Asp-186 each contribute to the Zn(2+) site. The JAMM motif motif lies at 173–186 (HNHPSGVAEPSQAD).

This sequence belongs to the UPF0758 family.

In Stutzerimonas stutzeri (strain A1501) (Pseudomonas stutzeri), this protein is UPF0758 protein PST_0473.